Here is a 414-residue protein sequence, read N- to C-terminus: MADEHRQPEVNIGLVGHVDHGKTTLVRALSGEWTDQHSEEMKRGISIRLGYADATLRRCPDCDEPECYTVAETCPEHDTATEIERTVSFVDAPGHETLMATMLSGAALMDGAVLVVGANEPVPQPQTEEHLMALDIIGIENIVIAQNKVDLVDAEEARQNYEEIQAFVEGTVAEDAPVVPVSAEQEINVDLVIDALQTEIATPDRDPSADPLLYAARSFDINRPGTEWGGLLGGVIGGSLVDGELEAGDELELRPGREVEEGGKTEWRPVTTDVRSLQAGGEDVDSASPGGLLGVGTGLDPSLTKGDALAGQVAGPPGSLPPTWESFEMDVDLLERLVGAADGEQIDDISTGEPLMLTVGTATTVGSVTSARDGECEVALKRPVCAPAGAKIAINRRVGARWRLIGVGTLTESE.

The 198-residue stretch at Gln7–Asp204 folds into the tr-type G domain. The interval Gly16–Thr23 is G1. Positions 19, 23, 44, and 46 each coordinate Mg(2+). Asp19 to Thr24 is a GTP binding site. Residues Gly44 to Arg48 are G2. The segment at Asp91–Gly94 is G3. Residues Asn147–Asp150 and Ser182–Glu184 each bind GTP. A G4 region spans residues Asn147–Asp150. The interval Ser182–Glu184 is G5.

It belongs to the TRAFAC class translation factor GTPase superfamily. Classic translation factor GTPase family. EIF2G subfamily. As to quaternary structure, heterotrimer composed of an alpha, a beta and a gamma chain. Mg(2+) serves as cofactor.

It carries out the reaction GTP + H2O = GDP + phosphate + H(+). In terms of biological role, eIF-2 functions in the early steps of protein synthesis by forming a ternary complex with GTP and initiator tRNA. The protein is Translation initiation factor 2 subunit gamma of Halobacterium salinarum (strain ATCC 29341 / DSM 671 / R1).